The following is a 779-amino-acid chain: Lysosome membrane protein 2-A (779 aa).

The Cytoplasmic segment spans residues 1–17 (MVKRGCCHRKMVNHKGC). The helical transmembrane segment at 18–38 (LVSGIFLAVIGAVLFILAFAL) threads the bilayer. The Lumenal segment spans residues 39 to 732 (LPHLINQTTQ…LLNSQFKLIK (694 aa)). 19 N-linked (GlcNAc...) asparagine glycosylation sites follow: Asn44, Asn86, Asn95, Asn114, Asn117, Asn201, Asn239, Asn262, Asn266, Asn277, Asn369, Asn410, Asn440, Asn508, Asn543, Asn601, Asn619, Asn651, and Asn693. Residues 733 to 753 (ILGFVPVIVVSIIGGIILIAG) traverse the membrane as a helical segment. Over 754 to 779 (ISMFAFGFKKLRQQKQQGYQAIINNE) the chain is Cytoplasmic. Positions 771 to 774 (GYQA) match the Tyrosine-type lysosomal sorting signal motif.

This sequence belongs to the CD36 family. Heavily glycosylated.

Its subcellular location is the lysosome membrane. Its function is as follows. May act as a lysosomal receptor. May be involved in macropinocytosis and fluid phase exocytosis. Binds to the anionic phospholipid phosphoinositol 4,5-bisphosphate, but not to phosphatidylcholine and only weakly to phosphatidylserine. This Dictyostelium discoideum (Social amoeba) protein is Lysosome membrane protein 2-A (lmpA).